The primary structure comprises 207 residues: Dephospho-CoA kinase (207 aa).

Positions 12 to 207 (LIGITGMIGG…LYSTLLGKML (196 aa)) constitute a DPCK domain. 20–25 (GGGKST) lines the ATP pocket.

The protein belongs to the CoaE family.

The protein resides in the cytoplasm. It catalyses the reaction 3'-dephospho-CoA + ATP = ADP + CoA + H(+). The protein operates within cofactor biosynthesis; coenzyme A biosynthesis; CoA from (R)-pantothenate: step 5/5. Functionally, catalyzes the phosphorylation of the 3'-hydroxyl group of dephosphocoenzyme A to form coenzyme A. In Leptospira interrogans serogroup Icterohaemorrhagiae serovar copenhageni (strain Fiocruz L1-130), this protein is Dephospho-CoA kinase.